Consider the following 268-residue polypeptide: Tetraspanin-5 (268 aa).

At 1–17 (MSGKHYKGPEVSCCIKY) the chain is on the cytoplasmic side. Residues 18–38 (FIFGFNVIFWFLGIAFLGIGL) form a helical membrane-spanning segment. The Extracellular segment spans residues 39 to 61 (WAWNEKGVLSNISSITDLGGFDP). Residue asparagine 49 is glycosylated (N-linked (GlcNAc...) asparagine). A helical membrane pass occupies residues 62-82 (VWLFLVVGGVMFILGFAGCIG). Topologically, residues 83–92 (ALRENTFLLK) are cytoplasmic. A helical membrane pass occupies residues 93-113 (FFSVFLGIIFFLELTAGVLAF). The Extracellular segment spans residues 114-232 (VFKDWIKDQL…PQFEKWLQDN (119 aa)). 4 disulfides stabilise this stretch: cysteine 153–cysteine 221, cysteine 154–cysteine 186, cysteine 170–cysteine 180, and cysteine 187–cysteine 200. Asparagine 169 and asparagine 174 each carry an N-linked (GlcNAc...) asparagine glycan. Asparagine 232 is a glycosylation site (N-linked (GlcNAc...) asparagine). Residues 233–253 (LTIVAGIFIGIALLQIFGICL) traverse the membrane as a helical segment. The Cytoplasmic portion of the chain corresponds to 254-268 (AQNLVSDIEAVRASW).

It belongs to the tetraspanin (TM4SF) family. In terms of assembly, interacts with ADAM10; the interaction influences ADAM10 substrate specificity, endocytosis and turnover. Post-translationally, palmitoylated.

Its subcellular location is the cell membrane. Part of TspanC8 subgroup, composed of 6 members that interact with the transmembrane metalloprotease ADAM10. This interaction is required for ADAM10 exit from the endoplasmic reticulum and for enzymatic maturation and trafficking to the cell surface as well as substrate specificity. Different TspanC8/ADAM10 complexes have distinct substrates. Promotes ADAM10-mediated cleavage of CD44. Seems to regulate VE-cadherin expression in endothelial cells probably through interaction with ADAM10, promoting leukocyte transmigration. This chain is Tetraspanin-5 (TSPAN5), found in Bos taurus (Bovine).